A 460-amino-acid polypeptide reads, in one-letter code: Kynurenine 3-monooxygenase (460 aa).

FAD contacts are provided by residues V13, 32–34 (DFR), and A53. 2 residues coordinate L-kynurenine: R83 and Y97. Residues R109, L133, Y195, D314, and 325 to 328 (QGMN) each bind FAD. 2 residues coordinate L-kynurenine: N373 and Y408.

Belongs to the aromatic-ring hydroxylase family. KMO subfamily. It depends on FAD as a cofactor.

It localises to the mitochondrion outer membrane. The catalysed reaction is L-kynurenine + NADPH + O2 + H(+) = 3-hydroxy-L-kynurenine + NADP(+) + H2O. It functions in the pathway cofactor biosynthesis; NAD(+) biosynthesis; quinolinate from L-kynurenine: step 1/3. Functionally, catalyzes the hydroxylation of L-kynurenine (L-Kyn) to form 3-hydroxy-L-kynurenine (L-3OHKyn). Required for synthesis of quinolinic acid. In Saccharomyces cerevisiae (strain ATCC 204508 / S288c) (Baker's yeast), this protein is Kynurenine 3-monooxygenase.